Consider the following 879-residue polypeptide: Alanine--tRNA ligase (879 aa).

Zn(2+) contacts are provided by His-567, His-571, Cys-669, and His-673.

The protein belongs to the class-II aminoacyl-tRNA synthetase family. It depends on Zn(2+) as a cofactor.

The protein localises to the cytoplasm. It catalyses the reaction tRNA(Ala) + L-alanine + ATP = L-alanyl-tRNA(Ala) + AMP + diphosphate. Catalyzes the attachment of alanine to tRNA(Ala) in a two-step reaction: alanine is first activated by ATP to form Ala-AMP and then transferred to the acceptor end of tRNA(Ala). Also edits incorrectly charged Ser-tRNA(Ala) and Gly-tRNA(Ala) via its editing domain. In Levilactobacillus brevis (strain ATCC 367 / BCRC 12310 / CIP 105137 / JCM 1170 / LMG 11437 / NCIMB 947 / NCTC 947) (Lactobacillus brevis), this protein is Alanine--tRNA ligase.